Reading from the N-terminus, the 119-residue chain is Large ribosomal subunit protein bL20 (119 aa).

Belongs to the bacterial ribosomal protein bL20 family.

Binds directly to 23S ribosomal RNA and is necessary for the in vitro assembly process of the 50S ribosomal subunit. It is not involved in the protein synthesizing functions of that subunit. The protein is Large ribosomal subunit protein bL20 of Gloeobacter violaceus (strain ATCC 29082 / PCC 7421).